Reading from the N-terminus, the 136-residue chain is Large-conductance mechanosensitive channel (136 aa).

A run of 2 helical transmembrane segments spans residues 10–30 and 76–96; these read FAMRGNVVDLAVGVIIGAAFG and GVFIQNVFDFLIVAFAIFMAI.

Belongs to the MscL family. As to quaternary structure, homopentamer.

The protein resides in the cell inner membrane. Channel that opens in response to stretch forces in the membrane lipid bilayer. May participate in the regulation of osmotic pressure changes within the cell. This Shigella boydii serotype 18 (strain CDC 3083-94 / BS512) protein is Large-conductance mechanosensitive channel.